The following is a 287-amino-acid chain: ATP synthase gamma chain (287 aa).

The protein belongs to the ATPase gamma chain family. F-type ATPases have 2 components, CF(1) - the catalytic core - and CF(0) - the membrane proton channel. CF(1) has five subunits: alpha(3), beta(3), gamma(1), delta(1), epsilon(1). CF(0) has three main subunits: a, b and c.

The protein resides in the cell inner membrane. Functionally, produces ATP from ADP in the presence of a proton gradient across the membrane. The gamma chain is believed to be important in regulating ATPase activity and the flow of protons through the CF(0) complex. This is ATP synthase gamma chain from Tolumonas auensis (strain DSM 9187 / NBRC 110442 / TA 4).